A 324-amino-acid polypeptide reads, in one-letter code: Putative divalent cation/proton antiporter TMEM165 (324 aa).

The first 33 residues, 1 to 33 (MAAAAPGNGRASAPRLLLLFLVPLLWAPAAVRA), serve as a signal peptide directing secretion. Residues 34–89 (GPDEDLSHRNKEPPAPAQQLQPQPVAVQGPEPARVEKIFTPAAPVHTNKEDPATQT) lie on the Lumenal side of the membrane. The segment covering 35–45 (PDEDLSHRNKE) has biased composition (basic and acidic residues). The tract at residues 35–59 (PDEDLSHRNKEPPAPAQQLQPQPVA) is disordered. Residues 50–59 (AQQLQPQPVA) are compositionally biased toward low complexity. Residues 90-110 (NLGFIHAFVAAISVIIVSELG) traverse the membrane as a helical segment. The Cytoplasmic segment spans residues 111–126 (DKTFFIAAIMAMRYNR). The helical transmembrane segment at 127–147 (LTVLAGAMLALGLMTCLSVLF) threads the bilayer. The Lumenal portion of the chain corresponds to 148–151 (GYAT). Residues 152 to 172 (TVIPRVYTYYVSTVLFAIFGI) traverse the membrane as a helical segment. The Cytoplasmic segment spans residues 173-228 (RMLREGLKMSPDEGQEELEEVQAELKKKDEEFQRTKLLNGPGDVETGTSITVPQKK). Residues 184-211 (DEGQEELEEVQAELKKKDEEFQRTKLLN) adopt a coiled-coil conformation. Residues 229-249 (WLHFISPIFVQALTLTFLAEW) traverse the membrane as a helical segment. Over 250–267 (GDRSQLTTIVLAAREDPY) the chain is Lumenal. A helical membrane pass occupies residues 268 to 288 (GVAVGGTVGHCLCTGLAVIGG). At 289-299 (RMIAQKISVRT) the chain is on the cytoplasmic side. A helical membrane pass occupies residues 300–320 (VTIIGGIVFLAFAFSALFISP). Topologically, residues 321–324 (DSGF) are lumenal.

Belongs to the GDT1 family. As to expression, ubiquitously expressed.

It localises to the golgi apparatus membrane. It catalyses the reaction Ca(2+)(in) + n H(+)(out) = Ca(2+)(out) + n H(+)(in). The catalysed reaction is Mn(2+)(in) + n H(+)(out) = Mn(2+)(out) + n H(+)(in). In terms of biological role, putative divalent cation:proton antiporter that exchanges calcium or manganese ions for protons across the Golgi membrane. Mediates the reversible transport of calcium or manganese to the Golgi lumen driven by the proton gradient and possibly the membrane potential generated by V-ATPase. Provides calcium or manganese cofactors to resident Golgi enzymes and contributes to the maintenance of an acidic luminal Golgi pH required for proper functioning of the secretory pathway. Promotes Ca(2+) storage within the Golgi lumen of the mammary epithelial cells to be then secreted into milk. The transport mechanism and stoichiometry remains to be elucidated. This is Putative divalent cation/proton antiporter TMEM165 from Homo sapiens (Human).